The primary structure comprises 422 residues: Tyrosine--tRNA ligase 1 (422 aa).

Tyr-36 serves as a coordination point for L-tyrosine. The 'HIGH' region signature appears at 41–50 (PTAGSLHIGH). 2 residues coordinate L-tyrosine: Tyr-173 and Gln-177. Residues 233–237 (KFGKT) carry the 'KMSKS' region motif. An ATP-binding site is contributed by Lys-236. An S4 RNA-binding domain is found at 355 to 419 (SDVVTLLLET…GKKQFAMVKL (65 aa)).

It belongs to the class-I aminoacyl-tRNA synthetase family. TyrS type 1 subfamily. As to quaternary structure, homodimer.

It localises to the cytoplasm. It catalyses the reaction tRNA(Tyr) + L-tyrosine + ATP = L-tyrosyl-tRNA(Tyr) + AMP + diphosphate + H(+). In terms of biological role, catalyzes the attachment of tyrosine to tRNA(Tyr) in a two-step reaction: tyrosine is first activated by ATP to form Tyr-AMP and then transferred to the acceptor end of tRNA(Tyr). In Vibrio vulnificus (strain CMCP6), this protein is Tyrosine--tRNA ligase 1.